A 177-amino-acid polypeptide reads, in one-letter code: B-phycoerythrin beta chain (177 aa).

Residues C50 and C61 each contribute to the phycourobilin site. Residue N72 is modified to N4-methylasparagine. (2R,3E)-phycoerythrobilin-binding residues include C82 and C158.

It belongs to the phycobiliprotein family. As to quaternary structure, heteromer of 6 alpha, 6 beta and one gamma chain. Contains two covalently linked phycoerythrobilin chromophores and one covalently linked phycourobilin chromophore.

It localises to the plastid. Its subcellular location is the chloroplast thylakoid membrane. Its function is as follows. Light-harvesting photosynthetic bile pigment-protein from the phycobiliprotein complex. In Porphyridium purpureum (Red alga), this protein is B-phycoerythrin beta chain (cpeB).